The chain runs to 649 residues: Threonine--tRNA ligase (649 aa).

The TGS domain occupies 1 to 63; the sequence is MSSIKITFPD…KEDGSIEIIT (63 aa). Positions 245–543 are catalytic; that stretch reads DHRVIGNELD…LTEMYKGAFP (299 aa). Residues C339, H390, and H520 each coordinate Zn(2+).

The protein belongs to the class-II aminoacyl-tRNA synthetase family. Homodimer. Requires Zn(2+) as cofactor.

The protein localises to the cytoplasm. It catalyses the reaction tRNA(Thr) + L-threonine + ATP = L-threonyl-tRNA(Thr) + AMP + diphosphate + H(+). Catalyzes the attachment of threonine to tRNA(Thr) in a two-step reaction: L-threonine is first activated by ATP to form Thr-AMP and then transferred to the acceptor end of tRNA(Thr). Also edits incorrectly charged L-seryl-tRNA(Thr). In Ligilactobacillus salivarius (strain UCC118) (Lactobacillus salivarius), this protein is Threonine--tRNA ligase.